We begin with the raw amino-acid sequence, 380 residues long: Cytochrome b (380 aa).

4 helical membrane passes run 34–54 (FGSL…LLAM), 78–99 (WLIR…YLHI), 114–134 (WNTG…GYVL), and 179–199 (FFAL…IHLT). Heme b contacts are provided by histidine 84 and histidine 98. Heme b is bound by residues histidine 183 and histidine 197. Residue histidine 202 participates in a ubiquinone binding. 4 helical membrane-spanning segments follow: residues 227 to 247 (LKDI…ALFS), 289 to 309 (LGGV…PFLH), 321 to 341 (ISQL…WVGS), and 348 to 368 (FIII…VLFP).

Belongs to the cytochrome b family. As to quaternary structure, the cytochrome bc1 complex contains 11 subunits: 3 respiratory subunits (MT-CYB, CYC1 and UQCRFS1), 2 core proteins (UQCRC1 and UQCRC2) and 6 low-molecular weight proteins (UQCRH/QCR6, UQCRB/QCR7, UQCRQ/QCR8, UQCR10/QCR9, UQCR11/QCR10 and a cleavage product of UQCRFS1). This cytochrome bc1 complex then forms a dimer. Heme b serves as cofactor.

Its subcellular location is the mitochondrion inner membrane. Functionally, component of the ubiquinol-cytochrome c reductase complex (complex III or cytochrome b-c1 complex) that is part of the mitochondrial respiratory chain. The b-c1 complex mediates electron transfer from ubiquinol to cytochrome c. Contributes to the generation of a proton gradient across the mitochondrial membrane that is then used for ATP synthesis. In Pelecanoides georgicus (South Georgia diving petrel), this protein is Cytochrome b (MT-CYB).